Here is a 102-residue protein sequence, read N- to C-terminus: Small ubiquitin-related modifier 1-A (102 aa).

A disordered region spans residues 1–20; it reads MSDQEAKPSSEDLGDKKDGG. The Ubiquitin-like domain occupies 21–98; that stretch reads DYIKLKVIGQ…IEVYQEQTGG (78 aa). G98 is covalently cross-linked (Glycyl lysine isopeptide (Gly-Lys) (interchain with K-? in acceptor proteins)). Residues 99–102 constitute a propeptide that is removed on maturation; that stretch reads HSTF.

This sequence belongs to the ubiquitin family. SUMO subfamily. Interacts with sae2, ube2i, ranbp2, pias1 and pias2. Covalently attached to a number of proteins including rangap1 and ranbp2. Interacts with sox9 and sox10. Cleavage of precursor form by a sentrin-specific protease is necessary for function.

It is found in the nucleus membrane. It localises to the nucleus speckle. The protein resides in the cytoplasm. The protein localises to the nucleus. Its subcellular location is the PML body. It is found in the cell membrane. In terms of biological role, ubiquitin-like protein that can be covalently attached to proteins as a monomer or a lysine-linked polymer. Covalent attachment via an isopeptide bond to its substrates requires prior activation by the E1 complex sae1-sae2 and linkage to the E2 enzyme ube2i. This post-translational modification on lysine residues of proteins plays a crucial role in a number of cellular processes such as nuclear transport, DNA replication and repair, mitosis and signal transduction. Polymeric sumo1 chains are also susceptible to polyubiquitination which functions as a signal for proteasomal degradation of modified proteins. The polypeptide is Small ubiquitin-related modifier 1-A (sumo1-a) (Xenopus laevis (African clawed frog)).